The following is a 349-amino-acid chain: UDP-N-acetylenolpyruvoylglucosamine reductase (349 aa).

Residues 25–197 (GIAARARFAA…VAVTFRLPKQ (173 aa)) enclose the FAD-binding PCMH-type domain. Residue R173 is part of the active site. Catalysis depends on S249, which acts as the Proton donor. Residue E345 is part of the active site.

Belongs to the MurB family. It depends on FAD as a cofactor.

It localises to the cytoplasm. It catalyses the reaction UDP-N-acetyl-alpha-D-muramate + NADP(+) = UDP-N-acetyl-3-O-(1-carboxyvinyl)-alpha-D-glucosamine + NADPH + H(+). Its pathway is cell wall biogenesis; peptidoglycan biosynthesis. Functionally, cell wall formation. This is UDP-N-acetylenolpyruvoylglucosamine reductase from Burkholderia orbicola (strain MC0-3).